The chain runs to 274 residues: Large ribosomal subunit protein uL2 (274 aa).

The disordered stretch occupies residues 224–256 (AMNPIDHPHGGGEGRTGEGRHAVDPWGNLTKGY). Positions 229–246 (DHPHGGGEGRTGEGRHAV) are enriched in basic and acidic residues.

It belongs to the universal ribosomal protein uL2 family. As to quaternary structure, part of the 50S ribosomal subunit. Forms a bridge to the 30S subunit in the 70S ribosome.

In terms of biological role, one of the primary rRNA binding proteins. Required for association of the 30S and 50S subunits to form the 70S ribosome, for tRNA binding and peptide bond formation. It has been suggested to have peptidyltransferase activity; this is somewhat controversial. Makes several contacts with the 16S rRNA in the 70S ribosome. The polypeptide is Large ribosomal subunit protein uL2 (Acidovorax ebreus (strain TPSY) (Diaphorobacter sp. (strain TPSY))).